The primary structure comprises 438 residues: Keratin, type I cytoskeletal 18 (438 aa).

The tract at residues 4–83 (AVSSRSTVVS…TLSGNAVISN (80 aa)) is head. Positions 84-119 (EKETMQDLNDRLSNYLETVRRLENANQQLEIQIREA) are coil 1A. Residues 84–395 (EKETMQDLND…HLLGGEDSDT (312 aa)) form the IF rod domain. Positions 120–136 (MEKRGPSVRDYSNYEKI) are linker 1. Residues 137-228 (IKELRDQIYD…KNHEDEVIAL (92 aa)) form a coil 1B region. A linker 12 region spans residues 229 to 252 (RNQVNSCGVQVDLDAPKGTDLAEI). The interval 253-393 (MATLRAEYEA…YRHLLGGEDS (141 aa)) is coil 2. The interval 394 to 438 (DTLSLQDALSAMKVSNVQTVQKIVVTTQKLVDGKVVEDSTVTETK) is tail.

It belongs to the intermediate filament family. As to quaternary structure, heterotetramer of two type I and two type II keratins. Keratin-18 associates with keratin-8. In terms of processing, phosphorylated. Proteolytically cleaved by caspases during epithelial cell apoptosis. Expressed at low levels in skin.

In terms of biological role, when phosphorylated, plays a role in filament reorganization. This is Keratin, type I cytoskeletal 18 from Protopterus aethiopicus (Marbled lungfish).